Here is a 361-residue protein sequence, read N- to C-terminus: Chorismate synthase (361 aa).

Residues arginine 48 and arginine 54 each contribute to the NADP(+) site. Residues 125–127, 238–239, glycine 278, 293–297, and arginine 319 contribute to the FMN site; these read RSS, NA, and KPTSS.

This sequence belongs to the chorismate synthase family. Homotetramer. FMNH2 serves as cofactor.

The enzyme catalyses 5-O-(1-carboxyvinyl)-3-phosphoshikimate = chorismate + phosphate. The protein operates within metabolic intermediate biosynthesis; chorismate biosynthesis; chorismate from D-erythrose 4-phosphate and phosphoenolpyruvate: step 7/7. Functionally, catalyzes the anti-1,4-elimination of the C-3 phosphate and the C-6 proR hydrogen from 5-enolpyruvylshikimate-3-phosphate (EPSP) to yield chorismate, which is the branch point compound that serves as the starting substrate for the three terminal pathways of aromatic amino acid biosynthesis. This reaction introduces a second double bond into the aromatic ring system. The chain is Chorismate synthase from Shigella flexneri.